The following is a 127-amino-acid chain: Fumarate reductase subunit C (127 aa).

3 helical membrane-spanning segments follow: residues 30-50, 67-87, and 107-127; these read ATVLPLILFTIFLTFGLGSLV, IVVAINIVALLGSLFHAQTFF, and IIVLTQWAAVAFISLIVLIVM.

This sequence belongs to the FrdC family. In terms of assembly, part of an enzyme complex containing four subunits: a flavoprotein (FrdA), an iron-sulfur protein (FrdB), and two hydrophobic anchor proteins (FrdC and FrdD).

It is found in the cell inner membrane. Functionally, anchors the catalytic components of the fumarate reductase complex to the cell membrane, binds quinones. In Vibrio campbellii (strain ATCC BAA-1116), this protein is Fumarate reductase subunit C.